The chain runs to 176 residues: Ribosome maturation factor RimM (176 aa).

The 74-residue stretch at 93 to 166 folds into the PRC barrel domain; sequence ADEYYHADLI…QVVIEPPNEI (74 aa).

Belongs to the RimM family. In terms of assembly, binds ribosomal protein uS19.

The protein resides in the cytoplasm. In terms of biological role, an accessory protein needed during the final step in the assembly of 30S ribosomal subunit, possibly for assembly of the head region. Essential for efficient processing of 16S rRNA. May be needed both before and after RbfA during the maturation of 16S rRNA. It has affinity for free ribosomal 30S subunits but not for 70S ribosomes. This Rhodopseudomonas palustris (strain ATCC BAA-98 / CGA009) protein is Ribosome maturation factor RimM.